We begin with the raw amino-acid sequence, 209 residues long: Uracil phosphoribosyltransferase (209 aa).

5-phospho-alpha-D-ribose 1-diphosphate-binding positions include Arg-79, Arg-104, and 131-139 (DPMLATGGS). Residues Ile-194 and 199-201 (GDA) each bind uracil. A 5-phospho-alpha-D-ribose 1-diphosphate-binding site is contributed by Asp-200.

The protein belongs to the UPRTase family. Mg(2+) is required as a cofactor.

It carries out the reaction UMP + diphosphate = 5-phospho-alpha-D-ribose 1-diphosphate + uracil. It functions in the pathway pyrimidine metabolism; UMP biosynthesis via salvage pathway; UMP from uracil: step 1/1. With respect to regulation, allosterically activated by GTP. In terms of biological role, catalyzes the conversion of uracil and 5-phospho-alpha-D-ribose 1-diphosphate (PRPP) to UMP and diphosphate. The protein is Uracil phosphoribosyltransferase of Streptococcus pyogenes serotype M1.